A 343-amino-acid polypeptide reads, in one-letter code: Photosystem II protein D1 (343 aa).

3 helical membrane-spanning segments follow: residues 28-45, 117-132, and 141-155; these read YIGWFGVLLFPLIAVSTV, HFLAAVLAWLGREYEY, and WIYLAFSAPVVAASA. Position 117 (His117) interacts with chlorophyll a. Trp125 lines the pheophytin a pocket. [CaMn4O5] cluster is bound by residues Asp169 and Glu188. Residues 196–217 form a helical membrane-spanning segment; it reads FHILGVSAVFGGSLFSAMHGSL. His197 lines the chlorophyll a pocket. A quinone contacts are provided by residues His214 and 263–264; that span reads SF. Fe cation is bound at residue His214. His271 contacts Fe cation. Residues 273 to 287 traverse the membrane as a helical segment; that stretch reads FLAAWPVIGIWCTAI. Residues His331, Glu332, Asp341, and Ala343 each coordinate [CaMn4O5] cluster.

Belongs to the reaction center PufL/M/PsbA/D family. PSII is composed of 1 copy each of membrane proteins PsbA, PsbB, PsbC, PsbD, PsbE, PsbF, PsbH, PsbI, PsbJ, PsbK, PsbL, PsbM, PsbT, PsbX, PsbY, PsbZ, Psb30/Ycf12, at least 3 peripheral proteins of the oxygen-evolving complex and a large number of cofactors. It forms dimeric complexes. The D1/D2 heterodimer binds P680, chlorophylls that are the primary electron donor of PSII, and subsequent electron acceptors. It shares a non-heme iron and each subunit binds pheophytin, quinone, additional chlorophylls, carotenoids and lipids. D1 provides most of the ligands for the Mn4-Ca-O5 cluster of the oxygen-evolving complex (OEC). There is also a Cl(-1) ion associated with D1 and D2, which is required for oxygen evolution. The PSII complex binds additional chlorophylls, carotenoids and specific lipids. is required as a cofactor. In terms of processing, tyr-160 forms a radical intermediate that is referred to as redox-active TyrZ, YZ or Y-Z.

Its subcellular location is the plastid. It is found in the chloroplast thylakoid membrane. It catalyses the reaction 2 a plastoquinone + 4 hnu + 2 H2O = 2 a plastoquinol + O2. Photosystem II (PSII) is a light-driven water:plastoquinone oxidoreductase that uses light energy to abstract electrons from H(2)O, generating O(2) and a proton gradient subsequently used for ATP formation. It consists of a core antenna complex that captures photons, and an electron transfer chain that converts photonic excitation into a charge separation. The D1/D2 (PsbA/PsbD) reaction center heterodimer binds P680, the primary electron donor of PSII as well as several subsequent electron acceptors. This chain is Photosystem II protein D1, found in Prorocentrum micans (Red tide dinoflagellate).